Reading from the N-terminus, the 154-residue chain is Large ribosomal subunit protein uL13 (154 aa).

Belongs to the universal ribosomal protein uL13 family. In terms of assembly, part of the 50S ribosomal subunit.

In terms of biological role, this protein is one of the early assembly proteins of the 50S ribosomal subunit, although it is not seen to bind rRNA by itself. It is important during the early stages of 50S assembly. This chain is Large ribosomal subunit protein uL13, found in Brucella melitensis biotype 2 (strain ATCC 23457).